Here is a 239-residue protein sequence, read N- to C-terminus: Sugar fermentation stimulation protein homolog (239 aa).

This sequence belongs to the SfsA family.

The sequence is that of Sugar fermentation stimulation protein homolog from Agrobacterium fabrum (strain C58 / ATCC 33970) (Agrobacterium tumefaciens (strain C58)).